A 695-amino-acid polypeptide reads, in one-letter code: MPRGRGGGGGGLRQASATSAPLASPSYYERVGQLQQALRDSEKKRLDLEDKLYEYNKSDKCRAKLKCAKLKKYLKEVCESERRAQVRNQGYLKKFECVQTYVEHLTTNTEKLQKLKTEYEAEVKRMRLLSKDSLGMSDEDGAKDAVQAGINSGTAMSRGLYQPATIFMGRQMSAISSIEDFSTELKSNQPTKNFSISDPHSHQQTAQSSCVTDSCVVQTNGDTQCLNKSDKIHGKTSLQTGEKAPVTSYVLSAEEQTHCLEIGSSTQHSKSNLSEGRKSAELHSSLQERLSPENSITDLKCDSSSRSEGSDREILTQEHIEVREERAGPLVPMMAASEHCTSAKKWAGEKHSAWEASSDDLDHGDSKSQKAVLKHEEEQEEGSSCSSSDLTVSVSEDDLILESLAALSNPGAKMAGKDGMQALRAAHTEPRQDSLFTEYVLQTQSFPDSKREPSPDSPRQPEKVPDCHLLKTRGQCMKEHDNSLKEEATTLLKKVLTEECDHRSAIHSNESSCSMPSILNDNNGIKEAKPALRLNSVLTREQEVSSGCGDESKEESIAAAPGTGHREADLVPSELFQFSLGAAMKETKAYQLLKKSTLQDNSNQAEERFESQFSGLDIGGSMFTTKTAHKIASEASFSSSEGSPLSRHESKRDPVTTIKSNAFWGESDDSNSEIEAALRPRDHDMPDDFDDFYDT.

A compositionally biased stretch (gly residues) spans 1 to 12 (MPRGRGGGGGGL). The segment at 1 to 24 (MPRGRGGGGGGLRQASATSAPLAS) is disordered. Positions 15–24 (ASATSAPLAS) are enriched in low complexity. Coiled coils occupy residues 29–57 (ERVG…EYNK) and 102–132 (VEHL…LSKD). Disordered regions lie at residues 261–313 (EIGS…SDRE), 351–391 (HSAW…SDLT), 444–465 (QSFP…EKVP), and 633–695 (SEAS…FYDT). 2 stretches are compositionally biased toward polar residues: residues 263–274 (GSSTQHSKSNLS) and 282–297 (LHSS…NSIT). Basic and acidic residues-rich tracts occupy residues 299-313 (LKCD…SDRE) and 360-377 (DLDH…KHEE). Residues 382-391 (GSSCSSSDLT) show a composition bias toward low complexity. A Phosphothreonine; by PLK1 modification is found at Thr-391. Positions 448-465 (DSKREPSPDSPRQPEKVP) are enriched in basic and acidic residues. Low complexity predominate over residues 633–645 (SEASFSSSEGSPL). Ser-667, Ser-670, and Ser-672 each carry phosphoserine. A compositionally biased stretch (basic and acidic residues) spans 676–686 (AALRPRDHDMP).

It belongs to the kizuna family. In terms of assembly, interacts with AKAP9, CEP72, ODF2, PCNT and TUBGCP2. Post-translationally, phosphorylation at Thr-391 by PLK1 is not needed for centrosomal localization or pericentriolar material expansion but is indispensable for spindle-pole stabilization.

It localises to the cytoplasm. Its subcellular location is the cytoskeleton. The protein resides in the microtubule organizing center. It is found in the centrosome. The protein localises to the cilium basal body. Its function is as follows. Centrosomal protein required for establishing a robust mitotic centrosome architecture that can endure the forces that converge on the centrosomes during spindle formation. Required for stabilizing the expanded pericentriolar material around the centriole. The chain is Centrosomal protein kizuna (Kiz) from Mus musculus (Mouse).